The following is a 799-amino-acid chain: Leucine--tRNA ligase (799 aa).

The 'HIGH' region motif lies at 39-50 (PYPSGAGLHMGH). The 'KMSKS' region signature appears at 575 to 579 (KMSKS). Position 578 (Lys578) interacts with ATP.

It belongs to the class-I aminoacyl-tRNA synthetase family.

Its subcellular location is the cytoplasm. The enzyme catalyses tRNA(Leu) + L-leucine + ATP = L-leucyl-tRNA(Leu) + AMP + diphosphate. The polypeptide is Leucine--tRNA ligase (Malacoplasma penetrans (strain HF-2) (Mycoplasma penetrans)).